We begin with the raw amino-acid sequence, 424 residues long: Enolase (424 aa).

Gln-163 provides a ligand contact to (2R)-2-phosphoglycerate. The active-site Proton donor is the Glu-205. Asp-242, Glu-285, and Asp-312 together coordinate Mg(2+). (2R)-2-phosphoglycerate contacts are provided by Lys-337, Arg-366, Ser-367, and Lys-388. Lys-337 functions as the Proton acceptor in the catalytic mechanism.

The protein belongs to the enolase family. Mg(2+) serves as cofactor.

It localises to the cytoplasm. The protein localises to the secreted. Its subcellular location is the cell surface. The catalysed reaction is (2R)-2-phosphoglycerate = phosphoenolpyruvate + H2O. The protein operates within carbohydrate degradation; glycolysis; pyruvate from D-glyceraldehyde 3-phosphate: step 4/5. Functionally, catalyzes the reversible conversion of 2-phosphoglycerate (2-PG) into phosphoenolpyruvate (PEP). It is essential for the degradation of carbohydrates via glycolysis. The polypeptide is Enolase (Roseobacter denitrificans (strain ATCC 33942 / OCh 114) (Erythrobacter sp. (strain OCh 114))).